The chain runs to 729 residues: MLYKGDTLYLNWLEDGIAELVFDAPGSVNKLDTATVASLGQALDVLEKQPELKGMLLRSNKAAFIVGADITEFLSLFLVPEEQLSQWLHFANSVFNRLEDLPVPTISAVNGYALGGGCECVLATDYRLATPDLRIGLPETRLGIMPGFGGSVRMPRMLGADSAMEIIAAGKDVGAEQAQKIGLVDGVVKPEKLVEGALAILRQAINGDLDWKAKRQPKLEPLKLSKIEATMSFTIAKGMVMQTAGKHYPAPITAVKTIEAAARLGRDEALKLENQSFVPLAHTNEARALVGIFLNDQFVKGKARQLTKNVETPKHAAVLGAGIMGGGIAYQSAWKGVPVVMKDISEKSLTLGMTEAAKLLNKQLERGKIDGLKLAGVISTIQPVLEYSGFDRVDVVVEAVVENPKVKKAVLAETEDKVRPETVLASNTSTIPISELASVLKRPENFCGMHFFNPVHRMPLVEVIRGEKTSDETIAKVVAWASKMGKTPIVVNDCPGFFVNRVLFPYFAGFSQLLRDGADFRKIDKVMEKQFGWPMGPAYLLDVVGIDTAHHAQAVMAAGFPQRMQKDYRDAIDALFDANRFGQKNGLGFWRYKENSKGKPKKEEDAVVDGLLADVSQPKRDFTDDEIIARMMIPMINEVVRCLEEGIIASPAEADMALVYGLGFPPFHGGAFRWLDTLGSARYLDMAQQYQHLGPLYEVPEGLRNKARHNEPYYPAVEPARPVGELKTA.

The segment at 1-189 (MLYKGDTLYL…KIGLVDGVVK (189 aa)) is enoyl-CoA hydratase/isomerase. Asp296 provides a ligand contact to substrate. The interval 311-729 (ETPKHAAVLG…ARPVGELKTA (419 aa)) is 3-hydroxyacyl-CoA dehydrogenase. NAD(+) is bound by residues Met324, Asp343, 400 to 402 (VVE), Lys407, and Ser429. Residue His450 is the For 3-hydroxyacyl-CoA dehydrogenase activity of the active site. Asn453 contacts NAD(+). Residues Asn500 and Tyr660 each coordinate substrate.

In the N-terminal section; belongs to the enoyl-CoA hydratase/isomerase family. The protein in the C-terminal section; belongs to the 3-hydroxyacyl-CoA dehydrogenase family. In terms of assembly, heterotetramer of two alpha chains (FadB) and two beta chains (FadA).

The enzyme catalyses a (3S)-3-hydroxyacyl-CoA + NAD(+) = a 3-oxoacyl-CoA + NADH + H(+). The catalysed reaction is a (3S)-3-hydroxyacyl-CoA = a (2E)-enoyl-CoA + H2O. It carries out the reaction a 4-saturated-(3S)-3-hydroxyacyl-CoA = a (3E)-enoyl-CoA + H2O. It catalyses the reaction (3S)-3-hydroxybutanoyl-CoA = (3R)-3-hydroxybutanoyl-CoA. The enzyme catalyses a (3Z)-enoyl-CoA = a 4-saturated (2E)-enoyl-CoA. The catalysed reaction is a (3E)-enoyl-CoA = a 4-saturated (2E)-enoyl-CoA. It functions in the pathway lipid metabolism; fatty acid beta-oxidation. In terms of biological role, involved in the aerobic and anaerobic degradation of long-chain fatty acids via beta-oxidation cycle. Catalyzes the formation of 3-oxoacyl-CoA from enoyl-CoA via L-3-hydroxyacyl-CoA. It can also use D-3-hydroxyacyl-CoA and cis-3-enoyl-CoA as substrate. The sequence is that of Fatty acid oxidation complex subunit alpha from Enterobacter cloacae.